A 433-amino-acid polypeptide reads, in one-letter code: 3-phosphoshikimate 1-carboxyvinyltransferase (433 aa).

3-phosphoshikimate-binding residues include Lys-21, Ser-22, and Arg-26. Lys-21 is a binding site for phosphoenolpyruvate. Phosphoenolpyruvate is bound by residues Gly-92 and Arg-120. Residues Ser-166, Gln-168, Asp-317, and Lys-344 each contribute to the 3-phosphoshikimate site. Gln-168 is a binding site for phosphoenolpyruvate. The active-site Proton acceptor is Asp-317. Arg-348 and Arg-391 together coordinate phosphoenolpyruvate.

The protein belongs to the EPSP synthase family. Monomer.

Its subcellular location is the cytoplasm. It carries out the reaction 3-phosphoshikimate + phosphoenolpyruvate = 5-O-(1-carboxyvinyl)-3-phosphoshikimate + phosphate. It participates in metabolic intermediate biosynthesis; chorismate biosynthesis; chorismate from D-erythrose 4-phosphate and phosphoenolpyruvate: step 6/7. Its function is as follows. Catalyzes the transfer of the enolpyruvyl moiety of phosphoenolpyruvate (PEP) to the 5-hydroxyl of shikimate-3-phosphate (S3P) to produce enolpyruvyl shikimate-3-phosphate and inorganic phosphate. In Caldicellulosiruptor saccharolyticus (strain ATCC 43494 / DSM 8903 / Tp8T 6331), this protein is 3-phosphoshikimate 1-carboxyvinyltransferase.